Here is an 82-residue protein sequence, read N- to C-terminus: Small ribosomal subunit protein uS17 (82 aa).

It belongs to the universal ribosomal protein uS17 family. As to quaternary structure, part of the 30S ribosomal subunit.

In terms of biological role, one of the primary rRNA binding proteins, it binds specifically to the 5'-end of 16S ribosomal RNA. The chain is Small ribosomal subunit protein uS17 from Pelobacter propionicus (strain DSM 2379 / NBRC 103807 / OttBd1).